A 283-amino-acid polypeptide reads, in one-letter code: Bis(5'-nucleosyl)-tetraphosphatase, symmetrical (283 aa).

Belongs to the Ap4A hydrolase family.

It carries out the reaction P(1),P(4)-bis(5'-adenosyl) tetraphosphate + H2O = 2 ADP + 2 H(+). Hydrolyzes diadenosine 5',5'''-P1,P4-tetraphosphate to yield ADP. The chain is Bis(5'-nucleosyl)-tetraphosphatase, symmetrical from Pseudomonas fluorescens (strain SBW25).